Here is a 195-residue protein sequence, read N- to C-terminus: uncharacterized protein (195 aa).

The signal sequence occupies residues 1–17 (MKASLITAFVLPLLALA). A glycan (N-linked (GlcNAc...) asparagine) is linked at Asn75.

The protein localises to the secreted. This is an uncharacterized protein from Arthroderma benhamiae (strain ATCC MYA-4681 / CBS 112371) (Trichophyton mentagrophytes).